The chain runs to 870 residues: Probable coatomer subunit gamma (870 aa).

HEAT repeat units lie at residues 60–97, 99–133, 168–205, 278–315, 316–350, and 389–425; these read TEAT…VSDD, IIVT…TGML, EVVR…NDRL, SEIQ…AHPN, AVMS…GAES, and HTVM…ENPD.

The protein belongs to the COPG family. Oligomeric complex that consists of at least the alpha, beta, beta', gamma, delta, epsilon and zeta subunits.

Its subcellular location is the cytoplasm. The protein localises to the golgi apparatus membrane. It localises to the cytoplasmic vesicle. The protein resides in the COPI-coated vesicle membrane. In terms of biological role, the coatomer is a cytosolic protein complex that binds to dilysine motifs and reversibly associates with Golgi non-clathrin-coated vesicles, which further mediate biosynthetic protein transport from the ER, via the Golgi up to the trans Golgi network. Coatomer complex is required for budding from Golgi membranes, and is essential for the retrograde Golgi-to-ER transport of dilysine-tagged proteins. The protein is Probable coatomer subunit gamma of Caenorhabditis elegans.